A 1202-amino-acid chain; its full sequence is Nitric oxide synthase 3 (1202 aa).

A disordered region spans residues Met1–Val70. Residue Gly2 is the site of N-myristoyl glycine attachment. 2 S-palmitoyl cysteine lipidation sites follow: Cys15 and Cys26. The segment covering Cys15–Gly27 has biased composition (gly residues). The segment covering Ser33–Pro65 has biased composition (pro residues). Zn(2+) contacts are provided by Cys93 and Cys98. The segment at Arg97 to Lys485 is interaction with NOSIP. Ser101 is a binding site for (6R)-L-erythro-5,6,7,8-tetrahydrobiopterin. Cys183 is a heme b binding site. L-arginine-binding residues include Gln246, Trp355, Tyr356, and Glu360. Positions 445, 446, and 459 each coordinate (6R)-L-erythro-5,6,7,8-tetrahydrobiopterin. Tyr474 is a binding site for heme b. Positions Ile489–Met509 are calmodulin-binding. The residue at position 494 (Thr494) is a Phosphothreonine; by AMPK. The Flavodoxin-like domain maps to Ala519–Phe702. FMN is bound by residues Ser525, Glu526, Thr527, Arg529, Ser571, and Thr572. Ser614, Ser632, and Ser637 each carry phosphoserine. Residues Ser653, Cys660, Glu686, and Gln690 each contribute to the FMN site. Residues Arg755–Pro1001 enclose the FAD-binding FR-type domain. Residue Arg775 participates in NADP(+) binding. His797 contributes to the FAD binding site. A disordered region spans residues Glu817–Trp843. Position 835 is a phosphoserine (Ser835). Residues Arg937, Tyr939, Ser940, Thr955, Ala957, Tyr961, Val974, Cys975, and Ser976 each coordinate FAD. Positions 1015, 1048, 1077, 1078, 1084, 1086, and 1088 each coordinate NADP(+). The residue at position 1174 (Thr1174) is a Phosphothreonine. The residue at position 1176 (Ser1176) is a Phosphoserine; by AMPK. Ser1178 carries the phosphoserine modification.

Belongs to the NOS family. In terms of assembly, homodimer. Interacts with NOSIP and NOSTRIN. Interacts with HSP90AB1. Forms a complex with ASL, ASS1 and SLC7A1; the complex regulates cell-autonomous L-arginine synthesis and citrulline recycling while channeling extracellular L-arginine to nitric oxide synthesis pathway. Requires heme b as cofactor. The cofactor is FAD. FMN serves as cofactor. (6R)-L-erythro-5,6,7,8-tetrahydrobiopterin is required as a cofactor. Phosphorylation by AMPK at Ser-1176 in the presence of Ca(2+)-calmodulin (CaM) activates activity. In absence of Ca(2+)-calmodulin, AMPK also phosphorylates Thr-494, resulting in inhibition of activity. In terms of tissue distribution, expressed constitutively by vascular endothelium. Detected in alveolar and serosal epithelial cells as well as in endothelial cells in one day old rat. In adult lung, detected in rare endothelial cells.

It localises to the membrane. The protein resides in the caveola. It is found in the cytoplasm. Its subcellular location is the cytoskeleton. The protein localises to the golgi apparatus. It localises to the cell membrane. It carries out the reaction 2 L-arginine + 3 NADPH + 4 O2 + H(+) = 2 L-citrulline + 2 nitric oxide + 3 NADP(+) + 4 H2O. Stimulated by calcium/calmodulin. Inhibited by NOSIP and NOSTRIN. Functionally, produces nitric oxide (NO) which is implicated in vascular smooth muscle relaxation through a cGMP-mediated signal transduction pathway. NO mediates vascular endothelial growth factor (VEGF)-induced angiogenesis in coronary vessels and promotes blood clotting through the activation of platelets. This Rattus norvegicus (Rat) protein is Nitric oxide synthase 3.